The primary structure comprises 54 residues: Large ribosomal subunit protein bL33 (54 aa).

This sequence belongs to the bacterial ribosomal protein bL33 family.

The chain is Large ribosomal subunit protein bL33 from Buchnera aphidicola subsp. Cinara cedri (strain Cc).